Here is a 309-residue protein sequence, read N- to C-terminus: MEGPEQWVIVGGWGSASAEFSEGLSRNMGLKLVKPVFKLFPDEEEYVRIEGDISGFTGAIVVQSFERPASRSLVYSLLIADALKEAGVGRIVLMAPYMGYTRQDRVFLPGEPVSVRAVMRALASSGYNALASIEVHKEYVLDYFDGSTLNIFPFTYMLKETGISCGDNTIIVAPDKGSLPRVERLARETGCRSYGYLVKERDRITGEVRLAKSTVDPRGKNAIVVDDIISTGGTIALASQWLLENGANSVFVLAAHYLGIGNAEEKMMKAGVSRVVTGNTLPRKPSKIVTYVDLTGLAAGQLTKLVSNL.

Residues 42–44 (DEE) and 102–103 (RQ) contribute to the ATP site. Residues His-136 and Asp-175 each coordinate Mg(2+). Residue Lys-199 is part of the active site. D-ribose 5-phosphate is bound by residues Arg-201, Asp-226, and 230 to 234 (STGGT).

This sequence belongs to the ribose-phosphate pyrophosphokinase family. Class III (archaeal) subfamily. Requires Mg(2+) as cofactor.

Its subcellular location is the cytoplasm. It carries out the reaction D-ribose 5-phosphate + ATP = 5-phospho-alpha-D-ribose 1-diphosphate + AMP + H(+). The protein operates within metabolic intermediate biosynthesis; 5-phospho-alpha-D-ribose 1-diphosphate biosynthesis; 5-phospho-alpha-D-ribose 1-diphosphate from D-ribose 5-phosphate (route I): step 1/1. Involved in the biosynthesis of the central metabolite phospho-alpha-D-ribosyl-1-pyrophosphate (PRPP) via the transfer of pyrophosphoryl group from ATP to 1-hydroxyl of ribose-5-phosphate (Rib-5-P). This is Ribose-phosphate pyrophosphokinase from Aeropyrum pernix (strain ATCC 700893 / DSM 11879 / JCM 9820 / NBRC 100138 / K1).